Reading from the N-terminus, the 426-residue chain is Phosphoribosylamine--glycine ligase (426 aa).

An ATP-grasp domain is found at 107 to 313 (KDFMQKYGVK…FLNVINSALN (207 aa)). 133–194 (LDKISYPVVI…EEFLDGVEIS (62 aa)) provides a ligand contact to ATP. Residues E283 and N285 each coordinate Mg(2+).

The protein belongs to the GARS family. It depends on Mg(2+) as a cofactor. Requires Mn(2+) as cofactor.

It carries out the reaction 5-phospho-beta-D-ribosylamine + glycine + ATP = N(1)-(5-phospho-beta-D-ribosyl)glycinamide + ADP + phosphate + H(+). The protein operates within purine metabolism; IMP biosynthesis via de novo pathway; N(1)-(5-phospho-D-ribosyl)glycinamide from 5-phospho-alpha-D-ribose 1-diphosphate: step 2/2. This chain is Phosphoribosylamine--glycine ligase, found in Fusobacterium nucleatum subsp. nucleatum (strain ATCC 25586 / DSM 15643 / BCRC 10681 / CIP 101130 / JCM 8532 / KCTC 2640 / LMG 13131 / VPI 4355).